The primary structure comprises 530 residues: Glucose-6-phosphate isomerase (530 aa).

The active-site Proton donor is glutamate 335. Residues histidine 366 and lysine 495 contribute to the active site.

This sequence belongs to the GPI family.

It localises to the cytoplasm. The catalysed reaction is alpha-D-glucose 6-phosphate = beta-D-fructose 6-phosphate. It participates in carbohydrate biosynthesis; gluconeogenesis. The protein operates within carbohydrate degradation; glycolysis; D-glyceraldehyde 3-phosphate and glycerone phosphate from D-glucose: step 2/4. In terms of biological role, catalyzes the reversible isomerization of glucose-6-phosphate to fructose-6-phosphate. In Roseobacter denitrificans (strain ATCC 33942 / OCh 114) (Erythrobacter sp. (strain OCh 114)), this protein is Glucose-6-phosphate isomerase.